The primary structure comprises 739 residues: ABC transporter G family member 20 (739 aa).

The 264-residue stretch at 88 to 351 (LSFKDLTYSV…FSEFGHPIPE (264 aa)) folds into the ABC transporter domain. 144–151 (GASGSGKS) contacts ATP. In terms of domain architecture, ABC transmembrane type-2 spans 433–643 (TEMLVIGKRS…PYEGVLQNEF (211 aa)). The next 6 membrane-spanning stretches (helical) occupy residues 452–472 (LFGI…TIFW), 487–507 (FFAF…PVFL), 528–548 (VLAH…AFAA), 563–583 (FLFF…FVTF), 593–613 (IGFT…GFFI), and 712–732 (LWIT…TLLI).

Belongs to the ABC transporter superfamily. ABCG family. Eye pigment precursor importer (TC 3.A.1.204) subfamily.

The protein localises to the membrane. The polypeptide is ABC transporter G family member 20 (ABCG20) (Arabidopsis thaliana (Mouse-ear cress)).